We begin with the raw amino-acid sequence, 499 residues long: Glutamyl-tRNA(Gln) amidotransferase subunit A (499 aa).

Active-site charge relay system residues include Lys-79 and Ser-154. Catalysis depends on Ser-178, which acts as the Acyl-ester intermediate.

This sequence belongs to the amidase family. GatA subfamily. In terms of assembly, heterotrimer of A, B and C subunits.

The enzyme catalyses L-glutamyl-tRNA(Gln) + L-glutamine + ATP + H2O = L-glutaminyl-tRNA(Gln) + L-glutamate + ADP + phosphate + H(+). In terms of biological role, allows the formation of correctly charged Gln-tRNA(Gln) through the transamidation of misacylated Glu-tRNA(Gln) in organisms which lack glutaminyl-tRNA synthetase. The reaction takes place in the presence of glutamine and ATP through an activated gamma-phospho-Glu-tRNA(Gln). The chain is Glutamyl-tRNA(Gln) amidotransferase subunit A from Psychrobacter sp. (strain PRwf-1).